Here is a 480-residue protein sequence, read N- to C-terminus: Cytochrome b-c1 complex subunit 1, mitochondrial (480 aa).

A mitochondrion-targeting transit peptide spans 1-34; sequence MAASVVCRAATAGAQVLLRARRSPALLRTPALRS. 2 positions are modified to N6-acetyllysine: Lys-111 and Lys-138. N6-acetyllysine; alternate is present on Lys-163. An N6-succinyllysine; alternate modification is found at Lys-163. Ser-212 carries the phosphoserine modification. At Lys-248 the chain carries N6-acetyllysine.

Belongs to the peptidase M16 family. UQCRC1/QCR1 subfamily. Component of the ubiquinol-cytochrome c oxidoreductase (cytochrome b-c1 complex, complex III, CIII), a multisubunit enzyme composed of 11 subunits. The complex is composed of 3 respiratory subunits cytochrome b, cytochrome c1 and Rieske protein UQCRFS1, 2 core protein subunits UQCRC1/QCR1 and UQCRC2/QCR2, and 6 low-molecular weight protein subunits UQCRH/QCR6, UQCRB/QCR7, UQCRQ/QCR8, UQCR10/QCR9, UQCR11/QCR10 and subunit 9, the cleavage product of Rieske protein UQCRFS1. The complex exists as an obligatory dimer and forms supercomplexes (SCs) in the inner mitochondrial membrane with NADH-ubiquinone oxidoreductase (complex I, CI) and cytochrome c oxidase (complex IV, CIV), resulting in different assemblies (supercomplex SCI(1)III(2)IV(1) and megacomplex MCI(2)III(2)IV(2)). Interacts with UQCC6. Interacts with STMP1. Expressed in brain, including substantia nigra, striatum, cortex and cerebellum, and in spinal cord, heart, kidney, liver and muscle.

The protein resides in the mitochondrion inner membrane. Component of the ubiquinol-cytochrome c oxidoreductase, a multisubunit transmembrane complex that is part of the mitochondrial electron transport chain which drives oxidative phosphorylation. The respiratory chain contains 3 multisubunit complexes succinate dehydrogenase (complex II, CII), ubiquinol-cytochrome c oxidoreductase (cytochrome b-c1 complex, complex III, CIII) and cytochrome c oxidase (complex IV, CIV), that cooperate to transfer electrons derived from NADH and succinate to molecular oxygen, creating an electrochemical gradient over the inner membrane that drives transmembrane transport and the ATP synthase. The cytochrome b-c1 complex catalyzes electron transfer from ubiquinol to cytochrome c, linking this redox reaction to translocation of protons across the mitochondrial inner membrane, with protons being carried across the membrane as hydrogens on the quinol. In the process called Q cycle, 2 protons are consumed from the matrix, 4 protons are released into the intermembrane space and 2 electrons are passed to cytochrome c. The 2 core subunits UQCRC1/QCR1 and UQCRC2/QCR2 are homologous to the 2 mitochondrial-processing peptidase (MPP) subunits beta-MPP and alpha-MPP respectively, and they seem to have preserved their MPP processing properties. May be involved in the in situ processing of UQCRFS1 into the mature Rieske protein and its mitochondrial targeting sequence (MTS)/subunit 9 when incorporated into complex III. Seems to play an important role in the maintenance of proper mitochondrial function in nigral dopaminergic neurons. In Homo sapiens (Human), this protein is Cytochrome b-c1 complex subunit 1, mitochondrial (UQCRC1).